The following is a 114-amino-acid chain: MADKMQALGAQLTQALQETDEFKALKAAFATMKEDDATYKLFKRFQQIQMDLQQKQMAGQQVTDDEMSRARDVADQVAKIEAVKTLMDAERGVNALLNQLNQTITQPIQDIYAG.

Belongs to the UPF0342 family.

The chain is UPF0342 protein LVIS_1488 from Levilactobacillus brevis (strain ATCC 367 / BCRC 12310 / CIP 105137 / JCM 1170 / LMG 11437 / NCIMB 947 / NCTC 947) (Lactobacillus brevis).